Here is a 460-residue protein sequence, read N- to C-terminus: ATP synthase subunit beta (460 aa).

150 to 157 (GGAGVGKT) is an ATP binding site.

This sequence belongs to the ATPase alpha/beta chains family. F-type ATPases have 2 components, CF(1) - the catalytic core - and CF(0) - the membrane proton channel. CF(1) has five subunits: alpha(3), beta(3), gamma(1), delta(1), epsilon(1). CF(0) has three main subunits: a(1), b(2) and c(9-12). The alpha and beta chains form an alternating ring which encloses part of the gamma chain. CF(1) is attached to CF(0) by a central stalk formed by the gamma and epsilon chains, while a peripheral stalk is formed by the delta and b chains.

It is found in the cell inner membrane. It carries out the reaction ATP + H2O + 4 H(+)(in) = ADP + phosphate + 5 H(+)(out). Functionally, produces ATP from ADP in the presence of a proton gradient across the membrane. The catalytic sites are hosted primarily by the beta subunits. The chain is ATP synthase subunit beta from Citrobacter koseri (strain ATCC BAA-895 / CDC 4225-83 / SGSC4696).